The following is a 91-amino-acid chain: Putative antitoxin YutD (91 aa).

Cys77 and Cys81 are joined by a disulfide.

In terms of assembly, homodimer, probably forms a complex with cognate toxin YutE.

Its function is as follows. Probable antitoxin component of a putative type VII toxin-antitoxin (TA) system. Probably neutralizes cognate toxin YutE. This Bacillus subtilis (strain 168) protein is Putative antitoxin YutD (yutD).